A 93-amino-acid polypeptide reads, in one-letter code: Large ribosomal subunit protein uL23cz/uL23cy (93 aa).

It belongs to the universal ribosomal protein uL23 family. Part of the 50S ribosomal subunit.

It is found in the plastid. The protein resides in the chloroplast. In terms of biological role, binds to 23S rRNA. This Piper cenocladum (Ant piper) protein is Large ribosomal subunit protein uL23cz/uL23cy (rpl23-A).